The chain runs to 67 residues: Large ribosomal subunit protein bL31 (67 aa).

This sequence belongs to the bacterial ribosomal protein bL31 family. Type A subfamily. Part of the 50S ribosomal subunit.

Functionally, binds the 23S rRNA. This chain is Large ribosomal subunit protein bL31, found in Leptospira borgpetersenii serovar Hardjo-bovis (strain JB197).